A 41-amino-acid polypeptide reads, in one-letter code: Large ribosomal subunit protein bL36 (41 aa).

Belongs to the bacterial ribosomal protein bL36 family.

This is Large ribosomal subunit protein bL36 from Novosphingobium aromaticivorans (strain ATCC 700278 / DSM 12444 / CCUG 56034 / CIP 105152 / NBRC 16084 / F199).